A 280-amino-acid chain; its full sequence is Type 1 encapsulin shell protein (280 aa).

It belongs to the encapsulin family. Family 1 subfamily. As to quaternary structure, this encapsulin nanocompartment is formed by 60 subunits; monomers form pentamers which assemble to form shells. There are 12 pores where the pentamers meet as well as 3-fold axis channels and dimer channels; none are larger than 3-4 Angstroms in diameter. The N-terminus of the protein is inside the shell, the C-terminus is outside.

The protein localises to the encapsulin nanocompartment. In terms of biological role, shell component of a type 1 encapsulin nanocompartment. Assembles into proteinaceous icosahedral shells 24 nm in diameter in the presence and absence of its ferritin cargo protein. The center of cargo-loaded nanocompartments is loaded with iron. The empty encapsulin nanocompartment sequesters about 2200 Fe ions while the cargo-loaded nanocompartment can maximally sequester about 4150 Fe ions. Does not have any detectable ferroxidase activity. This chain is Type 1 encapsulin shell protein, found in Rhodospirillum rubrum (strain ATCC 11170 / ATH 1.1.1 / DSM 467 / LMG 4362 / NCIMB 8255 / S1).